The primary structure comprises 323 residues: MESNQEYQVLLYYQYVTIDDPEAFAEEHLRYCKEIGLKGRILVANEGINGTVSGTIEQTTAYMDHMHNDERFHDMTFKIDPHEGHTFKKMHVRPRPELVTLRLEDDVNPLETTGEYLEPKDFYQALQDENTVVLDARNDYEYDLGHFRGAIRPDIKTFRDLPDWVQENKDMLEGKKVVTYCTGGIRCEKFSGWLVKEGFEDVAQLHGGIVTYGQDPEVQGDLWDGQLYVFDERISVPVNRKEHVIVGKDYFDGEPCERYVNCANPECNKQILASEENEHKYLRGCTHECRVTPRNLYVKEHELTGTQVEERLLAIGESLTQEV.

In terms of domain architecture, Rhodanese spans 127–221 (QDENTVVLDA…YGQDPEVQGD (95 aa)). The Cysteine persulfide intermediate role is filled by Cys-181.

This sequence belongs to the TrhO family.

The enzyme catalyses uridine(34) in tRNA + AH2 + O2 = 5-hydroxyuridine(34) in tRNA + A + H2O. In terms of biological role, catalyzes oxygen-dependent 5-hydroxyuridine (ho5U) modification at position 34 in tRNAs. The chain is tRNA uridine(34) hydroxylase from Oceanobacillus iheyensis (strain DSM 14371 / CIP 107618 / JCM 11309 / KCTC 3954 / HTE831).